The following is a 492-amino-acid chain: Glutamyl-tRNA(Gln) amidotransferase subunit A (492 aa).

Active-site charge relay system residues include K78 and S158. The active-site Acyl-ester intermediate is the S182.

The protein belongs to the amidase family. GatA subfamily. In terms of assembly, heterotrimer of A, B and C subunits.

The catalysed reaction is L-glutamyl-tRNA(Gln) + L-glutamine + ATP + H2O = L-glutaminyl-tRNA(Gln) + L-glutamate + ADP + phosphate + H(+). Functionally, allows the formation of correctly charged Gln-tRNA(Gln) through the transamidation of misacylated Glu-tRNA(Gln) in organisms which lack glutaminyl-tRNA synthetase. The reaction takes place in the presence of glutamine and ATP through an activated gamma-phospho-Glu-tRNA(Gln). The polypeptide is Glutamyl-tRNA(Gln) amidotransferase subunit A (Orientia tsutsugamushi (strain Boryong) (Rickettsia tsutsugamushi)).